A 363-amino-acid polypeptide reads, in one-letter code: Ferrochelatase (363 aa).

2 residues coordinate Fe cation: histidine 209 and glutamate 290.

The protein belongs to the ferrochelatase family.

Its subcellular location is the cytoplasm. It carries out the reaction heme b + 2 H(+) = protoporphyrin IX + Fe(2+). Its pathway is porphyrin-containing compound metabolism; protoheme biosynthesis; protoheme from protoporphyrin-IX: step 1/1. In terms of biological role, catalyzes the ferrous insertion into protoporphyrin IX. This chain is Ferrochelatase, found in Azoarcus sp. (strain BH72).